Reading from the N-terminus, the 335-residue chain is Nucleoid-associated protein Pput_1012 (335 aa).

Belongs to the YejK family.

Its subcellular location is the cytoplasm. The protein localises to the nucleoid. This is Nucleoid-associated protein Pput_1012 from Pseudomonas putida (strain ATCC 700007 / DSM 6899 / JCM 31910 / BCRC 17059 / LMG 24140 / F1).